The chain runs to 350 residues: Nicotinate-nucleotide--dimethylbenzimidazole phosphoribosyltransferase (350 aa).

Catalysis depends on Glu316, which acts as the Proton acceptor.

Belongs to the CobT family.

The catalysed reaction is 5,6-dimethylbenzimidazole + nicotinate beta-D-ribonucleotide = alpha-ribazole 5'-phosphate + nicotinate + H(+). The protein operates within nucleoside biosynthesis; alpha-ribazole biosynthesis; alpha-ribazole from 5,6-dimethylbenzimidazole: step 1/2. Its function is as follows. Catalyzes the synthesis of alpha-ribazole-5'-phosphate from nicotinate mononucleotide (NAMN) and 5,6-dimethylbenzimidazole (DMB). The protein is Nicotinate-nucleotide--dimethylbenzimidazole phosphoribosyltransferase of Pseudomonas syringae pv. tomato (strain ATCC BAA-871 / DC3000).